Reading from the N-terminus, the 380-residue chain is Cytoplasmic protein NCK2 (380 aa).

Thr-2 bears the N-acetylthreonine mark. In terms of domain architecture, SH3 1 spans Thr-2–Ser-61. Positions Lys-79–Asn-102 are disordered. At Ser-90 the chain carries Phosphoserine. Thr-92 is modified (phosphothreonine). The residue at position 94 (Ser-94) is a Phosphoserine. Phosphotyrosine is present on Tyr-110. 2 SH3 domains span residues Asp-111–Asp-170 and Arg-195–Asp-257. Positions Trp-285–Gln-380 constitute an SH2 domain.

In terms of assembly, interacts with DOCK1, LIMS1 and TGFB1I1. Part of a complex containing PPP1R15B, PP1 and NCK2. Interacts with FASLG. Interacts with AXL. Interacts with PAK1, PKN2 and SOS1. Interacts (via SH2 domain) with EGFR. Interacts (via SH2 domain) with DDR1. Interacts with IRS1. In terms of processing, phosphorylated. In terms of tissue distribution, ubiquitous.

The protein resides in the cytoplasm. It localises to the endoplasmic reticulum. Functionally, adapter protein which associates with tyrosine-phosphorylated growth factor receptors or their cellular substrates. Maintains low levels of EIF2S1 phosphorylation by promoting its dephosphorylation by PP1. Plays a role in ELK1-dependent transcriptional activation in response to activated Ras signaling. The sequence is that of Cytoplasmic protein NCK2 (NCK2) from Homo sapiens (Human).